Consider the following 196-residue polypeptide: Large ribosomal subunit protein uL18 (196 aa).

Belongs to the universal ribosomal protein uL18 family. As to quaternary structure, part of the 50S ribosomal subunit. Contacts the 5S and 23S rRNAs.

Its function is as follows. This is one of the proteins that bind and probably mediate the attachment of the 5S RNA into the large ribosomal subunit, where it forms part of the central protuberance. The sequence is that of Large ribosomal subunit protein uL18 from Saccharolobus islandicus (strain L.S.2.15 / Lassen #1) (Sulfolobus islandicus).